Here is a 306-residue protein sequence, read N- to C-terminus: Curved DNA-binding protein (306 aa).

The J domain maps to 5-69 (DYYAIMGVKP…QRRAEYDQMW (65 aa)).

Its subcellular location is the cytoplasm. It localises to the nucleoid. In terms of biological role, DNA-binding protein that preferentially recognizes a curved DNA sequence. It is probably a functional analog of DnaJ; displays overlapping activities with DnaJ, but functions under different conditions, probably acting as a molecular chaperone in an adaptive response to environmental stresses other than heat shock. Lacks autonomous chaperone activity; binds native substrates and targets them for recognition by DnaK. Its activity is inhibited by the binding of CbpM. The sequence is that of Curved DNA-binding protein from Escherichia coli (strain 55989 / EAEC).